A 240-amino-acid polypeptide reads, in one-letter code: Lysoplasmalogenase TMEM86A (240 aa).

Residues 1–21 are Cytoplasmic-facing; it reads MVSPVTVVKSEGPKLVPFFKA. The helical transmembrane segment at 22-42 threads the bilayer; the sequence is TCVYFVLWLPSSSPSWVSALI. Position 43 (Lys43) is a topological domain, extracellular. The chain crosses the membrane as a helical span at residues 44–64; sequence CLPIFCLWLFLLAHGLGFLLT. The Cytoplasmic portion of the chain corresponds to 65–70; sequence HPSATR. A helical transmembrane segment spans residues 71-91; that stretch reads IFVGLVFSAIGDAFLIWQDQG. Tyr92 is a topological domain (extracellular). Residues 93-113 form a helical membrane-spanning segment; it reads FVHGMLMFAVTHMLYASAFGM. The Cytoplasmic segment spans residues 114–115; sequence RP. The helical transmembrane segment at 116 to 136 threads the bilayer; sequence LGLRTGLLMVILSGLCYAFLY. Residues 137 to 138 are Extracellular-facing; sequence PN. A helical transmembrane segment spans residues 139–159; the sequence is LTGAFTYVVGVYVAIIGFMGW. Over 160–174 the chain is Cytoplasmic; that stretch reads RAMAGLQLVGAAWRW. Residues 175–195 traverse the membrane as a helical segment; that stretch reads TELAAGTGALLFIVSDLTIAL. The Extracellular portion of the chain corresponds to 196-206; sequence DKFCFPVPYSR. A helical membrane pass occupies residues 207 to 227; the sequence is ALIMSTYYAAQMLIALSAVES. Topologically, residues 228 to 240 are cytoplasmic; that stretch reads REPVEDYRLSKAK.

It belongs to the TMEM86 family.

It is found in the endoplasmic reticulum membrane. It carries out the reaction a 1-O-(1Z-alkenyl)-sn-glycero-3-phosphocholine + H2O = a 2,3-saturated aldehyde + sn-glycerol 3-phosphocholine. It catalyses the reaction a 1-O-(1Z-alkenyl)-sn-glycero-3-phosphoethanolamine + H2O = a 2,3-saturated aldehyde + sn-glycero-3-phosphoethanolamine. Functionally, catalyzes the hydrolysis of the vinyl ether bond of choline or ethanolamine lysoplasmalogens, forming fatty aldehyde and glycerophosphocholine or glycerophosphoethanolamine, respectively and is specific for the sn-2-deacylated (lyso) form of plasmalogen. Plays an important role in lysoplasmalogen metabolism in the adipocyte tissue and macrophages. The chain is Lysoplasmalogenase TMEM86A (TMEM86A) from Bos taurus (Bovine).